Here is a 712-residue protein sequence, read N- to C-terminus: MTTQITYFATAARGFEEMLKTELEQICQAECKVTQGGVHFTTTQRGAYQALLHSRLASRILLPLVTTKIFSDLDLYATIVGINWAYIFDPRDTFFVDFNGTNREIRNTQFGAMRVKDGVVDYFERKGFTRPTVDKDHADIRIHVYLDRENMVVSLDLSGDALHMRGYREDTGKAPLRETLAAAIVLRSGWQKGTPLVDPMCGSGTLLIEAAQMQAGIAPQLHRKHWGFNAWKGHQQAVWKEVLEQAYLQQNEEIQPLFFGFDLDHRVLAKAKQNAKNAGVAHLIQWQQGDIAALKNPCPEQVGTVICNPPYGERLGTTPALIALYSVFGQRLKQQFSGWNASIFSGEPELLNCLRLRSHRQFKAKNGPLDCLQKNYQISERTAAEQQADELKFEQNAQVAPDFANRLAKNIKKIEKWAKQQGINAYRLYDADLPEYNLAVDRYDDHIVVQEYAAPKNIDEQKARQRLLDAVSATLYVTGVETNKLVLKVRQKQKGTNQYEKLANKGDYFYVTEYGAKLWVNLTDYLDTGLFLDHRLTRKMVGQMAKGKTFLNLFAYTGSATIHAALNGAKSTTTVDMSNTYLNWAEQNLELNNLPLRNNRLFQADCLQWLAECRERFELIFVDPPTFSNSKRMEDSWDVQRDHIKLMTQLKRILTTDGTIVFSNNKRGFKMDFEGLAELGLQAENISHKTLPLDFERNPQIHNCWIIRHIEN.

A THUMP domain is found at 46–157 (GAYQALLHSR…RENMVVSLDL (112 aa)).

The protein belongs to the methyltransferase superfamily. RlmKL family.

It is found in the cytoplasm. It catalyses the reaction guanosine(2445) in 23S rRNA + S-adenosyl-L-methionine = N(2)-methylguanosine(2445) in 23S rRNA + S-adenosyl-L-homocysteine + H(+). The catalysed reaction is guanosine(2069) in 23S rRNA + S-adenosyl-L-methionine = N(2)-methylguanosine(2069) in 23S rRNA + S-adenosyl-L-homocysteine + H(+). Specifically methylates the guanine in position 2445 (m2G2445) and the guanine in position 2069 (m7G2069) of 23S rRNA. The polypeptide is Ribosomal RNA large subunit methyltransferase K/L (Actinobacillus pleuropneumoniae serotype 5b (strain L20)).